A 148-amino-acid polypeptide reads, in one-letter code: ASCH domain-containing ribonuclease (148 aa).

The ASCH domain occupies Ser13–Asn70.

The cofactor is Mn(2+). It depends on Ni(2+) as a cofactor.

Its function is as follows. Shows sequence-specific endoribonuclease activity towards single-stranded RNA (ssRNA), with a preference for the bond between pyrimidine and adenine nucleotides. May also have 5'-exonuclease activity. This chain is ASCH domain-containing ribonuclease, found in Zymomonas mobilis subsp. mobilis (strain ATCC 10988 / DSM 424 / LMG 404 / NCIMB 8938 / NRRL B-806 / ZM1).